Here is a 243-residue protein sequence, read N- to C-terminus: Cell division protein ZipA (243 aa).

The Periplasmic segment spans residues 1–4 (MSDV). Residues 5–25 (TLLRIGIAIVGILFVAAVFFF) form a helical membrane-spanning segment. The Cytoplasmic segment spans residues 26–243 (STPKTSAHRV…VPPLIKNSRW (218 aa)). The segment at 32–89 (AHRVRTKKEEPPRERREPMLSTEADNSPPQGVDEVPASVSQQQVNPEANKPGEVQLGK) is disordered. Positions 38–49 (KKEEPPRERREP) are enriched in basic and acidic residues.

It belongs to the ZipA family. Interacts with FtsZ via their C-terminal domains.

The protein localises to the cell inner membrane. Its function is as follows. Essential cell division protein that stabilizes the FtsZ protofilaments by cross-linking them and that serves as a cytoplasmic membrane anchor for the Z ring. Also required for the recruitment to the septal ring of downstream cell division proteins. The sequence is that of Cell division protein ZipA from Xylella fastidiosa (strain 9a5c).